A 599-amino-acid polypeptide reads, in one-letter code: Omega-hydroxyceramide transacylase (599 aa).

The region spanning 16–185 is the PNPLA domain; sequence ISFSGSGFLS…TSMQPCSFWT (170 aa). Residues 51 to 55 carry the GXSXG motif; it reads GTSAG. Ser-53 acts as the Nucleophile in catalysis. Asp-172 functions as the Proton acceptor in the catalytic mechanism. The DGA/G motif lies at 172–174; it reads DGG. The disordered stretch occupies residues 289-563; the sequence is PPPPSLQNLP…PASKLKSAPC (275 aa). Polar residues-rich tracts occupy residues 325 to 335 and 350 to 362; these read SSAAPSVQTPE and VSISKQPSVSPLS. Residues 443–454 are compositionally biased toward low complexity; it reads SPESPRLLLRSS. Positions 468–478 are enriched in pro residues; that stretch reads PLSPSTPPAGP. Residues 490 to 501 show a composition bias toward polar residues; it reads ATGSPALSQLTG. Residues 551-563 are compositionally biased toward low complexity; sequence SKKPASKLKSAPC.

Specifically expressed in skin by keratinocytes, at the boundary area between the nucleated stratum granulosum and the denucleated stratum corneum in the epidermis (at protein level). Also expressed in stomach and other surface lining tissues like intestine and tongue. Also detected in testis as well as in other tissues but at very low level.

It is found in the cytoplasm. It catalyses the reaction an N-(omega-hydroxy-ultra-long chain fatty acyl)-sphingoid base + a (9Z,12Z)-octadecadienoyl-containing triacyl-sn-glycerol = an N-[omega-(9Z,12Z-octadecadienoyloxy)-O-ultra-long chain fatty acyl]-sphingoid base + a diacylglycerol. The enzyme catalyses an N-(omega-hydroxy-ultra-long chain fatty acyl)-sphing-4-enine + a (9Z,12Z)-octadecadienoyl-containing triacyl-sn-glycerol = an N-(omega-(9Z,12Z-octadecadienoyloxy)-ultra-long chain fatty acyl)-sphing-4-enine + a diacylglycerol. It carries out the reaction N-(28-hydroxyoctacosanoyl)-sphing-4-enine + a (9Z,12Z)-octadecadienoyl-containing triacyl-sn-glycerol = N-(28-(9Z,12Z-octadecadienoyloxy)-octacosanoyl)-sphing-4-enine + a diacylglycerol. The catalysed reaction is N-(30-hydroxytriacontanoyl)-sphing-4-enine + 1,2,3-tri-(9Z,12Z)-octadecadienoylglycerol = N-[30-(9Z,12Z-octadecadienoyloxy)-triacontanoyl]-sphing-4-enine + di-(9Z,12Z)-octadecadienoylglycerol. It catalyses the reaction N-(32-hydroxydotriacontanoyl)-sphing-4-enine + a (9Z,12Z)-octadecadienoyl-containing triacyl-sn-glycerol = N-(32-(9Z,12Z-octadecadienoyloxy)-dotricontanoyl)-sphing-4-enine + a diacylglycerol. The enzyme catalyses N-(32-hydroxydotriacontenoyl)-sphing-4-enine + a (9Z,12Z)-octadecadienoyl-containing triacyl-sn-glycerol = an N-(32-(9Z,12Z-octadecadienoyloxy)-dotriacontenoyl)-sphing-4-enine + a diacylglycerol. It carries out the reaction an N-(34-hydroxytetratriacontenoyl)-sphing-4-enine + a (9Z,12Z)-octadecadienoyl-containing triacyl-sn-glycerol = an N-(34-(9Z,12Z-octadecadienoyloxy)-tetratriacontenoyl)-sphing-4-enine + a diacylglycerol. The catalysed reaction is an N-(34-hydroxytetratriacontadienoyl)-sphing-4-enine + a (9Z,12Z)-octadecadienoyl-containing triacyl-sn-glycerol = an N-(34-(9Z,12Z-octadecadienoyloxy)-tetratriacontadienoyl)-sphing-4-enine + a diacylglycerol. It catalyses the reaction an N-(36-hydroxyhexatriacontenoyl)-sphing-4-enine + a (9Z,12Z)-octadecadienoyl-containing triacyl-sn-glycerol = an N-(36-(9Z,12Z-octadecadienoyloxy)-hexatriacontenoyl)-sphing-4-enine + a diacylglycerol. The enzyme catalyses an N-(36-hydroxyhexatriacontadienoyl)-sphing-4-enine + a (9Z,12Z)-octadecadienoyl-containing triacyl-sn-glycerol = an N-(36-(9Z,12Z-octadecadienoyloxy)-hexatriacontadienoyl)-sphing-4-enine + a diacylglycerol. It carries out the reaction an N-(38-hydroxyoctatriacontenoyl)-sphing-4-enine + a (9Z,12Z)-octadecadienoyl-containing triacyl-sn-glycerol = an N-(38-(9Z,12Z-octadecadienoyloxy)-octatriacontenoyl)-sphing-4-enine + a diacylglycerol. Functionally, omega-hydroxyceramide transacylase involved in the synthesis of omega-O-acylceramides (esterified omega-hydroxyacyl-sphingosine; EOS), which are extremely hydrophobic lipids involved in skin barrier formation. Catalyzes the last step of the synthesis of omega-O-acylceramides by transferring linoleic acid from triglycerides to an omega-hydroxyceramide. Omega-O-acylceramides, are required for the biogenesis of lipid lamellae in the stratum corneum and the formation of the cornified lipid envelope which are essential for the epidermis barrier function. These lipids also play a role in keratinocyte differentiation. May also act on omega-hydroxylated ultra-long chain fatty acids (omega-OH ULCFA) and acylglucosylceramides (GlcEOS). This chain is Omega-hydroxyceramide transacylase, found in Mus musculus (Mouse).